The following is an 853-amino-acid chain: NADH-quinone oxidoreductase subunit G 2 (853 aa).

Positions 1–78 (MIKVTIDEQS…GMVVRTNTPL (78 aa)) constitute a 2Fe-2S ferredoxin-type domain. [2Fe-2S] cluster contacts are provided by Cys-34, Cys-45, Cys-48, and Cys-62. The 4Fe-4S His(Cys)3-ligated-type domain occupies 78–117 (LIEETRSSMLDMLLANHPLDCPICDKGGECELQDMVMAYG). Residues His-94, Cys-98, Cys-101, Cys-107, Cys-148, Cys-151, Cys-154, Cys-198, Cys-224, Cys-227, Cys-231, and Cys-259 each contribute to the [4Fe-4S] cluster site. 4Fe-4S ferredoxin-type domains lie at 139-170 (PVII…LGTV) and 179-209 (TGFE…FPYR). In terms of domain architecture, 4Fe-4S Mo/W bis-MGD-type spans 217 to 273 (LAETDTICPHCGTGCQLTVGARKGEFMRVRSDWEHGVNRETLCVRGRFGLDFIESRD).

The protein belongs to the complex I 75 kDa subunit family. Requires [2Fe-2S] cluster as cofactor. [4Fe-4S] cluster is required as a cofactor.

It catalyses the reaction a quinone + NADH + 5 H(+)(in) = a quinol + NAD(+) + 4 H(+)(out). Functionally, NDH-1 shuttles electrons from NADH, via FMN and iron-sulfur (Fe-S) centers, to quinones in the respiratory chain. The immediate electron acceptor for the enzyme in this species is believed to be ubiquinone. Couples the redox reaction to proton translocation (for every two electrons transferred, four hydrogen ions are translocated across the cytoplasmic membrane), and thus conserves the redox energy in a proton gradient. This is NADH-quinone oxidoreductase subunit G 2 (nuoG2) from Rhizobium meliloti (strain 1021) (Ensifer meliloti).